An 834-amino-acid polypeptide reads, in one-letter code: Transcription intermediary factor 1-beta (834 aa).

A2 is subject to N-acetylalanine. The segment covering 13-23 has biased composition (low complexity); sequence AATAASAASGS. A disordered region spans residues 13–56; that stretch reads AATAASAASGSPGSGEGSAGGEKRPAASSAAAASAAASSPAGGG. A phosphoserine mark is found at S23, S26, and S30. A Glycyl lysine isopeptide (Lys-Gly) (interchain with G-Cter in SUMO2) cross-link involves residue K35. Over residues 38 to 52 the composition is skewed to low complexity; that stretch reads AASSAAAASAAASSP. The residue at position 51 (S51) is a Phosphoserine. The RING-type zinc-finger motif lies at 66–122; it reads CGVCRERLRPERDPRLLPCLHSACSACLGPATPAAANNSGDGGSAGDGAMVDCPVCK. Residue K128 forms a Glycyl lysine isopeptide (Lys-Gly) (interchain with G-Cter in SUMO2) linkage. S139 carries the post-translational modification Phosphoserine. A B box-type 1 zinc finger spans residues 149-196; it reads DANQCCTSCEDNAPATSYCVECSEPLCETCVEAHQRVKYTKDHTVRST. Residues C154, C157, C178, and H182 each contribute to the Zn(2+) site. A Glycyl lysine isopeptide (Lys-Gly) (interchain with G-Cter in SUMO2) cross-link involves residue K200. Residues 205 to 246 form a B box-type 2 zinc finger; it reads ERTVYCNVHKHEPLVLFCESCDTLTCRDCQLNAHKDHQYQFL. Positions 210, 213, 233, and 238 each coordinate Zn(2+). Positions 247–377 are leucine zipper alpha helical coiled-coil region; sequence EDAVRNQRKL…LIYFQLHRAL (131 aa). An interaction with MAGEC2 region spans residues 248–377; the sequence is DAVRNQRKLL…LIYFQLHRAL (130 aa). Residues K255 and K262 each participate in a glycyl lysine isopeptide (Lys-Gly) (interchain with G-Cter in SUMO2) cross-link. At K267 the chain carries N6-acetyllysine. A Glycyl lysine isopeptide (Lys-Gly) (interchain with G-Cter in SUMO2) cross-link involves residue K273. K305 bears the N6-acetyllysine; alternate mark. K305 is covalently cross-linked (Glycyl lysine isopeptide (Lys-Gly) (interchain with G-Cter in SUMO2); alternate). K320 participates in a covalent cross-link: Glycyl lysine isopeptide (Lys-Gly) (interchain with G-Cter in SUMO2). Position 341 is an N6-acetyllysine (K341). K367 participates in a covalent cross-link: Glycyl lysine isopeptide (Lys-Gly) (interchain with G-Cter in SUMO2). The segment at 367–371 is involved in binding PPP1CA; that stretch reads KLIYF. The residue at position 378 (K378) is an N6-acetyllysine; alternate. Residue K378 forms a Glycyl lysine isopeptide (Lys-Gly) (interchain with G-Cter in SUMO2); alternate linkage. A Glycyl lysine isopeptide (Lys-Gly) (interchain with G-Cter in SUMO1); alternate cross-link involves residue K378. A Glycyl lysine isopeptide (Lys-Gly) (interchain with G-Cter in SUMO2) cross-link involves residue K408. A disordered region spans residues 412–480; that stretch reads ERPGTNSTGP…SRSGEGEVSG (69 aa). Position 418 is a phosphoserine (S418). Residue K435 forms a Glycyl lysine isopeptide (Lys-Gly) (interchain with G-Cter in SUMO2) linkage. Positions 435–444 are enriched in polar residues; the sequence is KQGSGSSQPM. S438, S440, and S454 each carry phosphoserine. K469 participates in a covalent cross-link: Glycyl lysine isopeptide (Lys-Gly) (interchain with G-Cter in SUMO2); alternate. A Glycyl lysine isopeptide (Lys-Gly) (interchain with G-Cter in SUMO1); alternate cross-link involves residue K469. Citrulline is present on R470. Position 471 is a phosphoserine (S471). R472 bears the Citrulline mark. 3 positions are modified to phosphoserine: S473, S479, and S489. The segment at 476–513 is HP1 box; that stretch reads GEVSGLLRKVPRVSLERLDLDLTSDSQPPVFKVFPGST. The short motif at 481-494 is the PxVxL motif element; it reads LLRKVPRVSLERLD. T498 bears the Phosphothreonine mark. Phosphoserine is present on S501. K507 participates in a covalent cross-link: Glycyl lysine isopeptide (Lys-Gly) (interchain with G-Cter in SUMO2). K554 is covalently cross-linked (Glycyl lysine isopeptide (Lys-Gly) (interchain with G-Cter in SUMO2); alternate). Residue K554 forms a Glycyl lysine isopeptide (Lys-Gly) (interchain with G-Cter in SUMO); alternate linkage. Residue K575 forms a Glycyl lysine isopeptide (Lys-Gly) (interchain with G-Cter in SUMO2) linkage. A disordered region spans residues 581-602; the sequence is LTEGPGAEGPRLASPSGSTSSG. The residue at position 594 (S594) is a Phosphoserine. The PHD-type zinc finger occupies 625 to 672; that stretch reads ATICRVCQKPGDLVMCNQCEFCFHLDCHLPALQDVPGEEWSCSLCHVL. K676 is covalently cross-linked (Glycyl lysine isopeptide (Lys-Gly) (interchain with G-Cter in SUMO)). A phosphoserine mark is found at S683, S689, and S697. The Bromo domain maps to 695 to 799; it reads KLSPANQRKC…RFFETRMNDA (105 aa). K750 is covalently cross-linked (Glycyl lysine isopeptide (Lys-Gly) (interchain with G-Cter in SUMO2); alternate). Residue K750 forms a Glycyl lysine isopeptide (Lys-Gly) (interchain with G-Cter in SUMO1); alternate linkage. K750 is covalently cross-linked (Glycyl lysine isopeptide (Lys-Gly) (interchain with G-Cter in SUMO); alternate). Phosphoserine is present on S752. A Phosphotyrosine modification is found at Y755. Phosphoserine is present on S757. An N6-acetyllysine; alternate mark is found at K770, K774, and K779. Residues K770, K774, and K779 each participate in a glycyl lysine isopeptide (Lys-Gly) (interchain with G-Cter in SUMO2); alternate cross-link. Residue K779 forms a Glycyl lysine isopeptide (Lys-Gly) (interchain with G-Cter in SUMO1); alternate linkage. Phosphoserine is present on S784. Residue K804 forms a Glycyl lysine isopeptide (Lys-Gly) (interchain with G-Cter in SUMO2) linkage. Residue S824 is modified to Phosphoserine; by ATM and ATR and dsDNA kinase.

The protein belongs to the TRIM/RBCC family. Oligomer; the RBCC domain homotrimerizes and interacts with one molecule of KRAB to form the KRAB-KAP1 corepressor complex. Interacts with SETX. Binding to a KRAB domain is an absolute requirement for silencing gene expression. Interacts with a number of KRAB-ZFP proteins including ZNF10, ZFP53, ZFP68, ZNF382 and ZNF256. Interacts with NCOR1, NR3C1 and CHD3. Interacts with CEBPB (via the RING-type and PHD-type zinc fingers). Interacts with CBX5 (via the PxVxL motif); the interaction occurs in interphase nuclei and competes for binding POGZ. Interacts with POGZ; the interaction competes for interaction with CBX5. Interacts with SETDB1; the interaction is enhanced by KAP1 sumoylation, stimulates SETDB1 histone methyltransferase activity and gene silencing. Interacts (via the PHD-type zinc finger) with UBE2I; the interaction is required for sumoylation and repressor activity. Component of the TRIM28/KAP1-ERBB4-MDM2 complex involved in connecting growth factor and DNA damage responses. Interacts directly with ERBB4; the interaction represses ERBB4-mediated transcription activity. Interacts with MDM2; the interaction contributes to p53/TP53 inactivation. Component of the TRIM28/KAP1-MDM2-p53/TP53; involved in regulating p53/TP53 stabilization and activity. Interacts (via the leucine zipper alpha helical coiled-coil) with E2F1 (central region); the interaction inhibits E2F1 acetylation and transcriptional activity. Interacts with PPP1CA; the interaction dephosphorylates TRIM28 at Ser-824 and forms a complex at the p21 promoter site. Interacts with PPP1CB; the interaction is weak but is increased on dephosphorylation at Ser-824. Interacts with CEBPB and NR3C1. Interacts with CBX5 (via the PxVxL motif); the interaction occurs in interphase nuclei and competes for binding POGZ. Component of a ternary complex that includes TRIM28, a HP1 protein (CBX1, CBX3 OR CBX5), a KRAB domain-containing protein, and DNA. Interacts with SMARCAD1. Interacts with, and sumoylates IRF7. Interacts with MAGEC2. Part of a complex composed of TRIM28, HDAC1, HDAC2 and EHMT2. Interacts (via the RBCC domain) with KOX1 (via the KRAB domain), ZNF268 (via the KRAB domain) and ZNF300 (via the KRAB domain); the interactions increase KOX1, ZNF268 and ZNF300 nuclear localization activities. Interacts with AICDA. The large PER complex involved in the histone methylation is composed of at least PER2, CBX3, TRIM28, SUV39H1 and/or SUV39H2; CBX3 mediates the formation of the complex. Interacts with NR4A3; the interactions potentiates NR4A3 activity on NurRE promoter. Interacts (unphosphorylated or phosphorylated form) with ZBTB1 (via BTB domain). Probably part of a corepressor complex containing ZNF304, TRIM28, SETDB1 and DNMT1. Interacts with ATRX. Forms a complex with ATRX, SETDB1 and ZNF274. Interacts with ZFP568; the interaction mediates ZFP568 transcriptional repression activity. Interacts with RRP1B. Interacts with CRY1. Interacts with ZNF263; recruited to the SIX3 promoter along with other proteins involved in chromatin modification and transcriptional corepression where it contributes to transcriptional repression. Interacts with CYREN (via XLF motif). Interacts with TRIM17; this interaction prevents TRIM28 activity. Interacts with ZNF746. Interacts with PHF13. Interacts with ZNF354C. Interacts with ZNF432; the interaction is independent of PARP1. Post-translationally, ATM-induced phosphorylation on Ser-824 represses sumoylation leading to the de-repression of expression of a subset of genes involved in cell cycle control and apoptosis in response to genotoxic stress. Dephosphorylation by the phosphatases, PPP1CA and PP1CB forms, allows sumoylation and expression of TRIM28 target genes. Sumoylation/desumoylation events regulate TRIM28-mediated transcriptional repression. Sumoylation is required for interaction with CHD3 and SETDB1 and the corepressor activity. Represses and is repressed by Ser-824 phosphorylation. Enhances the TRIM28 corepressor activity, inhibiting transcriptional activity of a number of genes including GADD45A and CDKN1A/p21. Lys-554, Lys-779 and Lys-804 are the major sites of sumoylation. In response to Dox-induced DNA damage, enhanced phosphorylation on Ser-824 prevents sumoylation and allows de-repression of CDKN1A/p21. In terms of processing, auto-ubiquitinated; enhanced by MAGEA2 and MAGEC2. Post-translationally, citrullinated by PADI4. ADP-ribosylated by SIRT6, promoting TRIM28/KAP1 interaction with CBX5, thereby contributing to the packaging of LINE-1 retrotransposon elements into transcriptionally repressive heterochromatin.

The protein localises to the nucleus. It catalyses the reaction S-ubiquitinyl-[E2 ubiquitin-conjugating enzyme]-L-cysteine + [acceptor protein]-L-lysine = [E2 ubiquitin-conjugating enzyme]-L-cysteine + N(6)-ubiquitinyl-[acceptor protein]-L-lysine.. It participates in protein modification; protein sumoylation. Functionally, nuclear corepressor for KRAB domain-containing zinc finger proteins (KRAB-ZFPs). Mediates gene silencing by recruiting CHD3, a subunit of the nucleosome remodeling and deacetylation (NuRD) complex, and SETDB1 (which specifically methylates histone H3 at 'Lys-9' (H3K9me)) to the promoter regions of KRAB target genes. Enhances transcriptional repression by coordinating the increase in H3K9me, the decrease in histone H3 'Lys-9 and 'Lys-14' acetylation (H3K9ac and H3K14ac, respectively) and the disposition of HP1 proteins to silence gene expression. Recruitment of SETDB1 induces heterochromatinization. May play a role as a coactivator for CEBPB and NR3C1 in the transcriptional activation of ORM1. Also a corepressor for ERBB4. Inhibits E2F1 activity by stimulating E2F1-HDAC1 complex formation and inhibiting E2F1 acetylation. May serve as a partial backup to prevent E2F1-mediated apoptosis in the absence of RB1. Important regulator of CDKN1A/p21(CIP1). Has E3 SUMO-protein ligase activity toward itself via its PHD-type zinc finger. Specifically sumoylates IRF7, thereby inhibiting its transactivation activity. Ubiquitinates p53/TP53 leading to its proteasomal degradation; the function is enhanced by MAGEC2 and MAGEA2, and possibly MAGEA3 and MAGEA6. Mediates the nuclear localization of KOX1, ZNF268 and ZNF300 transcription factors. Probably forms a corepressor complex required for activated KRAS-mediated promoter hypermethylation and transcriptional silencing of tumor suppressor genes (TSGs) or other tumor-related genes in colorectal cancer (CRC) cells. Required to maintain a transcriptionally repressive state of genes in undifferentiated embryonic stem cells (ESCs). In ESCs, in collaboration with SETDB1, is also required for H3K9me3 and silencing of endogenous and introduced retroviruses in a DNA-methylation independent-pathway. Associates at promoter regions of tumor suppressor genes (TSGs) leading to their gene silencing. The SETDB1-TRIM28-ZNF274 complex may play a role in recruiting ATRX to the 3'-exons of zinc-finger coding genes with atypical chromatin signatures to establish or maintain/protect H3K9me3 at these transcriptionally active regions. Acts as a corepressor for ZFP568. This chain is Transcription intermediary factor 1-beta, found in Mus musculus (Mouse).